Reading from the N-terminus, the 129-residue chain is MAKAPIRAHKRIKRQIPNCIAHVHASFNNTIVTITDGQGNVLAWATAGGSGFRGSRKSTPFAAQVAAERCAEAVKDYGIKTLEVIVKGPGPGRESTVRAFNASGYRITSITDMTPIPHNGCRPPKRRRV.

The protein belongs to the universal ribosomal protein uS11 family. In terms of assembly, part of the 30S ribosomal subunit. Interacts with proteins S7 and S18. Binds to IF-3.

Its function is as follows. Located on the platform of the 30S subunit, it bridges several disparate RNA helices of the 16S rRNA. Forms part of the Shine-Dalgarno cleft in the 70S ribosome. The chain is Small ribosomal subunit protein uS11 from Hamiltonella defensa subsp. Acyrthosiphon pisum (strain 5AT).